The primary structure comprises 477 residues: Tyrosine--tRNA ligase, mitochondrial (477 aa).

The N-terminal 16 residues, 1–16, are a transit peptide targeting the mitochondrion; the sequence is MAAPILRSFSWGRWSG. Tyr-77 contacts L-tyrosine. ATP is bound at residue Asp-81. The 'HIGH' region signature appears at 82–91; the sequence is PTADSLHVGH. Asp-121, Tyr-221, Gln-225, and Asp-228 together coordinate L-tyrosine. An ATP-binding site is contributed by 244–246; sequence GSD. Gln-247 contributes to the L-tyrosine binding site. Residues Ile-274 and Lys-284 each coordinate ATP. The 'KMSKS' region signature appears at 281-285; that stretch reads KLGKS. N6-acetyllysine occurs at positions 355 and 367.

This sequence belongs to the class-I aminoacyl-tRNA synthetase family. Homodimer.

The protein localises to the mitochondrion matrix. It catalyses the reaction tRNA(Tyr) + L-tyrosine + ATP = L-tyrosyl-tRNA(Tyr) + AMP + diphosphate + H(+). In terms of biological role, catalyzes the attachment of tyrosine to tRNA(Tyr) in a two-step reaction: tyrosine is first activated by ATP to form Tyr-AMP and then transferred to the acceptor end of tRNA(Tyr). This is Tyrosine--tRNA ligase, mitochondrial (YARS2) from Homo sapiens (Human).